Here is a 507-residue protein sequence, read N- to C-terminus: Probable lipid II flippase MurJ (507 aa).

The next 13 helical transmembrane spans lie at 3–23 (LFRS…FGLV), 54–74 (IFAE…KMLI), 92–112 (LTLI…ILCI), 132–152 (ITIP…ILNS), 156–176 (FAAF…FTLI), 185–205 (ISIS…MFIC), 268–288 (IYQF…LPEM), 310–330 (IGLL…HPIT), 351–371 (ISAF…TPIF), 379–399 (TPLK…LLLM), 405–425 (IGIA…LYSY), 438–458 (IKLF…IIAL), and 472–492 (LLIK…IFFG).

This sequence belongs to the MurJ/MviN family.

The protein localises to the cell inner membrane. It functions in the pathway cell wall biogenesis; peptidoglycan biosynthesis. Functionally, involved in peptidoglycan biosynthesis. Transports lipid-linked peptidoglycan precursors from the inner to the outer leaflet of the cytoplasmic membrane. In Rickettsia prowazekii (strain Madrid E), this protein is Probable lipid II flippase MurJ.